Consider the following 232-residue polypeptide: Orotidine 5'-phosphate decarboxylase (232 aa).

Residues D13, K35, 62-71 (DLKFHDIPNT), T122, R182, Q191, G211, and R212 contribute to the substrate site. Residue K64 is the Proton donor of the active site.

Belongs to the OMP decarboxylase family. Type 1 subfamily. As to quaternary structure, homodimer.

The catalysed reaction is orotidine 5'-phosphate + H(+) = UMP + CO2. It participates in pyrimidine metabolism; UMP biosynthesis via de novo pathway; UMP from orotate: step 2/2. Its function is as follows. Catalyzes the decarboxylation of orotidine 5'-monophosphate (OMP) to uridine 5'-monophosphate (UMP). The protein is Orotidine 5'-phosphate decarboxylase of Pseudomonas fluorescens (strain Pf0-1).